A 134-amino-acid polypeptide reads, in one-letter code: Small ribosomal subunit protein uS11 (134 aa).

The protein belongs to the universal ribosomal protein uS11 family. In terms of assembly, part of the 30S ribosomal subunit. Interacts with proteins S7 and S18. Binds to IF-3.

Functionally, located on the platform of the 30S subunit, it bridges several disparate RNA helices of the 16S rRNA. Forms part of the Shine-Dalgarno cleft in the 70S ribosome. The polypeptide is Small ribosomal subunit protein uS11 (Herminiimonas arsenicoxydans).